The following is a 113-amino-acid chain: uncharacterized protein (113 aa).

The signal sequence occupies residues 1–38; it reads MVKIERKATDSAYHEFTKILTSSAQLMAFLNQSDFVKA.

This is an uncharacterized protein from Haemophilus influenzae (strain ATCC 51907 / DSM 11121 / KW20 / Rd).